The sequence spans 353 residues: Fe(3+) ions import ATP-binding protein FbpC (353 aa).

The ABC transporter domain maps to 9–239 (VTFQNVRKSF…PASSFIADFM (231 aa)). 41 to 48 (GPSGCGKT) lines the ATP pocket.

It belongs to the ABC transporter superfamily. Fe(3+) ion importer (TC 3.A.1.10) family. As to quaternary structure, the complex is composed of two ATP-binding proteins (FbpC), two transmembrane proteins (FbpB) and a solute-binding protein (FbpA).

The protein resides in the cell inner membrane. It catalyses the reaction Fe(3+)(out) + ATP + H2O = Fe(3+)(in) + ADP + phosphate + H(+). Functionally, part of the ABC transporter complex FbpABC involved in Fe(3+) ions import. Responsible for energy coupling to the transport system. The sequence is that of Fe(3+) ions import ATP-binding protein FbpC from Rhizobium etli (strain ATCC 51251 / DSM 11541 / JCM 21823 / NBRC 15573 / CFN 42).